Here is a 466-residue protein sequence, read N- to C-terminus: 5-hydroxytryptamine receptor (466 aa).

A disordered region spans residues 1-21; that stretch reads MNASRLPGFNDTSQDQPYPTS. Over 1–66 the chain is Extracellular; sequence MNASRLPGFN…TSFVLMAVTS (66 aa). Asparagine 2, asparagine 10, asparagine 29, asparagine 41, asparagine 45, and asparagine 50 each carry an N-linked (GlcNAc...) asparagine glycan. Positions 10-21 are enriched in polar residues; that stretch reads NDTSQDQPYPTS. Residues 67–89 form a helical membrane-spanning segment; that stretch reads VVLALIILATIVGNVFVIAAIII. The Cytoplasmic segment spans residues 90-99; the sequence is ERNLQNVANY. The chain crosses the membrane as a helical span at residues 100 to 121; it reads LVASLAVADLMVACLVMPLGAV. Residues 122-136 are Extracellular-facing; the sequence is YEVSQGWILGPELCD. Cysteine 135 and cysteine 215 are oxidised to a cystine. A helical transmembrane segment spans residues 137-158; the sequence is MWTSSDVLCSSASILHLVAIAT. Topologically, residues 159 to 177 are cytoplasmic; it reads DRYWAVTDVDYIHIRNEKR. The helical transmembrane segment at 178 to 200 threads the bilayer; that stretch reads IFTMIVLVWGAALVVSLAPQLGW. Topologically, residues 201–228 are extracellular; it reads KDPDYLARITQQQKCLVSQDLAYQIFAT. The helical transmembrane segment at 229–250 threads the bilayer; the sequence is MSTFYVPLAVILILYWKIFQTA. Topologically, residues 251–386 are cytoplasmic; that stretch reads RRRIRRRRDP…AKRERKAAKT (136 aa). Disordered stretches follow at residues 255–282 and 339–360; these read RRRR…QSAR and VPPS…KPER. The span at 339–353 shows a compositional bias: low complexity; that stretch reads VPPSVSPEKSSSTVT. The helical transmembrane segment at 387–410 threads the bilayer; sequence LAIITGAFVFCWLPFFIMALVMPI. The Extracellular segment spans residues 411–419; sequence CQTCVISDY. Residues 420 to 442 form a helical membrane-spanning segment; the sequence is LASFFLWLGYFNSTLNPVIYTIF. Topologically, residues 443 to 466 are cytoplasmic; sequence SPDFRQAFARILFGTHRRRRYKKF.

The protein belongs to the G-protein coupled receptor 1 family.

It localises to the cell membrane. Functionally, this is a receptor for 5-hydroxytryptamine (serotonin), a biogenic hormone that function as a neurotransmitter, a hormone, and a mitogen. The polypeptide is 5-hydroxytryptamine receptor (Heliothis virescens (Tobacco budworm moth)).